The primary structure comprises 310 residues: Putative methyltransferase mtx subunit H (310 aa).

The protein belongs to the MtrH family. May be part of a complex composed of 3 subunits; MtxA, MtxH and MtxX.

This is Putative methyltransferase mtx subunit H (mtxH) from Methanosarcina acetivorans (strain ATCC 35395 / DSM 2834 / JCM 12185 / C2A).